Here is a 356-residue protein sequence, read N- to C-terminus: Uroporphyrinogen decarboxylase (356 aa).

Residues 27–31 (RQAGR), Asp77, Tyr154, Ser209, and His327 contribute to the substrate site.

It belongs to the uroporphyrinogen decarboxylase family. As to quaternary structure, homodimer.

It is found in the cytoplasm. It carries out the reaction uroporphyrinogen III + 4 H(+) = coproporphyrinogen III + 4 CO2. It functions in the pathway porphyrin-containing compound metabolism; protoporphyrin-IX biosynthesis; coproporphyrinogen-III from 5-aminolevulinate: step 4/4. Functionally, catalyzes the decarboxylation of four acetate groups of uroporphyrinogen-III to yield coproporphyrinogen-III. The protein is Uroporphyrinogen decarboxylase of Aromatoleum aromaticum (strain DSM 19018 / LMG 30748 / EbN1) (Azoarcus sp. (strain EbN1)).